Consider the following 279-residue polypeptide: 3-methyl-2-oxobutanoate hydroxymethyltransferase (279 aa).

Residues D49 and D88 each coordinate Mg(2+). 3-methyl-2-oxobutanoate contacts are provided by residues 49 to 50, D88, and K118; that span reads DS. Residue E120 coordinates Mg(2+). Catalysis depends on E187, which acts as the Proton acceptor.

The protein belongs to the PanB family. Homodecamer; pentamer of dimers. Mg(2+) is required as a cofactor.

The protein localises to the cytoplasm. The catalysed reaction is 3-methyl-2-oxobutanoate + (6R)-5,10-methylene-5,6,7,8-tetrahydrofolate + H2O = 2-dehydropantoate + (6S)-5,6,7,8-tetrahydrofolate. It functions in the pathway cofactor biosynthesis; (R)-pantothenate biosynthesis; (R)-pantoate from 3-methyl-2-oxobutanoate: step 1/2. Functionally, catalyzes the reversible reaction in which hydroxymethyl group from 5,10-methylenetetrahydrofolate is transferred onto alpha-ketoisovalerate to form ketopantoate. This Agrobacterium fabrum (strain C58 / ATCC 33970) (Agrobacterium tumefaciens (strain C58)) protein is 3-methyl-2-oxobutanoate hydroxymethyltransferase.